The sequence spans 158 residues: Transcriptional repressor NrdR (158 aa).

A zinc finger lies at 3–34 (CPFCNSEETRVIDTRLTDDGHVVRRRRECEHC). Positions 49-139 (IFVVKKGGQR…VYKEFRDLDH (91 aa)) constitute an ATP-cone domain.

The protein belongs to the NrdR family. The cofactor is Zn(2+).

In terms of biological role, negatively regulates transcription of bacterial ribonucleotide reductase nrd genes and operons by binding to NrdR-boxes. The protein is Transcriptional repressor NrdR of Kosmotoga olearia (strain ATCC BAA-1733 / DSM 21960 / TBF 19.5.1).